Reading from the N-terminus, the 367-residue chain is C-C chemokine receptor type 6 (367 aa).

The Extracellular portion of the chain corresponds to 1–39 (MNSTESYFGTDDYDNTEYYSIPPDHGPCSLEEVRNFTKV). N-linked (GlcNAc...) asparagine glycosylation is found at Asn2 and Asn35. The helical transmembrane segment at 40-66 (FVPIAYSLICVFGLLGNIMVVMTFAFY) threads the bilayer. The Cytoplasmic portion of the chain corresponds to 67-75 (KKARSMTDV). Residues 76–96 (YLLNMAITDILFVLTLPFWAV) traverse the membrane as a helical segment. The Extracellular portion of the chain corresponds to 97 to 111 (THATNTWVFSDALCK). Cys110 and Cys189 are joined by a disulfide. Residues 112–133 (LMKGTYAVNFNCGMLLLACISM) form a helical membrane-spanning segment. Over 134–151 (DRYIAIVQATKSFRVRSR) the chain is Cytoplasmic. Residues 152–172 (TLTHSKVICVAVWFISIIISS) form a helical membrane-spanning segment. Residues 173–203 (PTFIFNKKYELQDRDVCEPRYRSVSEPITWK) are Extracellular-facing. Residues 204–230 (LLGMGLELFFGFFTPLLFMVFCYLFII) form a helical membrane-spanning segment. Topologically, residues 231–246 (KTLVQAQNSKRHRAIR) are cytoplasmic. A helical membrane pass occupies residues 247–271 (VVIAVVLVFLACQIPHNMVLLVTAV). Over 272–295 (NTGKVGRSCSTEKVLAYTRNVAEV) the chain is Extracellular. A helical transmembrane segment spans residues 296 to 313 (LAFLHCCLNPVLYAFIGQ). The Cytoplasmic segment spans residues 314-367 (KFRNYFMKIMKDVWCMRRKNKMPGFLCARVYSESYISRQTSETVENDNASSFTM).

The protein belongs to the G-protein coupled receptor 1 family. Sperm. Mainly localized in the principal piece and neck region of the tail but is also found in the acrosomal region in a small percentage of sperm cells. Expressed in natural regulatory T cells (nTregs) and a subset of early thymocyte progenitor double-negative 1 (DN1) cells. Expressed in memory B cells. Expressed by IL17 producing helper T-cells (Th17), type 1 effector cells (Th1), type 2 effector cells (Th2) and regulatory T-cells (Treg) (at protein level). Expressed by Th17 cells in spleen, Peyers patches, and lamina propria of small and large intestine. Highly expressed in testis, lung, colon, and dendritic cells.

The protein localises to the cell membrane. It localises to the cell surface. Functionally, receptor for the C-C type chemokine CCL20. Binds to CCL20 and subsequently transduces a signal by increasing the intracellular calcium ion levels. Although CCL20 is its major ligand it can also act as a receptor for non-chemokine ligands such as beta-defensins. Binds to defensin DEFB1 leading to increase in intracellular calcium ions and cAMP levels. Its binding to DEFB1 is essential for the function of DEFB1 in regulating sperm motility and bactericidal activity. Binds to defensins DEFB4 and DEFB4A/B and mediates their chemotactic effects. The ligand-receptor pair CCL20-CCR6 is responsible for the chemotaxis of dendritic cells (DC), effector/memory T-cells and B-cells and plays an important role at skin and mucosal surfaces under homeostatic and inflammatory conditions, as well as in pathology, including cancer and various autoimmune diseases. CCR6-mediated signals are essential for immune responses to microbes in the intestinal mucosa and in the modulation of inflammatory responses initiated by tissue insult and trauma. CCR6 is essential for the recruitment of both the pro-inflammatory IL17 producing helper T-cells (Th17) and the regulatory T-cells (Treg) to sites of inflammation. Required for the normal migration of Th17 cells in Peyers patches and other related tissue sites of the intestine and plays a role in regulating effector T-cell balance and distribution in inflamed intestine. Plays an important role in the coordination of early thymocyte precursor migration events important for normal subsequent thymocyte precursor development, but is not required for the formation of normal thymic natural regulatory T-cells (nTregs). Required for optimal differentiation of DN2 and DN3 thymocyte precursors. Essential for B-cell localization in the subepithelial dome of Peyers-patches and for efficient B-cell isotype switching to IgA in the Peyers-patches. Essential for appropriate anatomical distribution of memory B-cells in the spleen and for the secondary recall response of memory B-cells. Positively regulates sperm motility and chemotaxis via its binding to CCL20. The chain is C-C chemokine receptor type 6 (Ccr6) from Mus musculus (Mouse).